Consider the following 337-residue polypeptide: ATP-dependent 6-phosphofructokinase (337 aa).

ATP is bound at residue Gly-11. 21–25 (RAVVR) is an ADP binding site. Residues 72 to 73 (RY) and 102 to 105 (GDGS) each bind ATP. Asp-103 contacts Mg(2+). Residue 125-127 (TID) coordinates substrate. Catalysis depends on Asp-127, which acts as the Proton acceptor. Arg-154 serves as a coordination point for ADP. Substrate-binding positions include Arg-162 and 169-171 (MGR). ADP contacts are provided by residues 185–187 (GAD) and 214–216 (KNH). Substrate contacts are provided by residues Glu-223, Arg-245, and 251-254 (HILR).

The protein belongs to the phosphofructokinase type A (PFKA) family. ATP-dependent PFK group I subfamily. Prokaryotic clade 'B1' sub-subfamily. Homotetramer. Mg(2+) is required as a cofactor.

The protein localises to the cytoplasm. The enzyme catalyses beta-D-fructose 6-phosphate + ATP = beta-D-fructose 1,6-bisphosphate + ADP + H(+). It functions in the pathway carbohydrate degradation; glycolysis; D-glyceraldehyde 3-phosphate and glycerone phosphate from D-glucose: step 3/4. With respect to regulation, allosterically activated by ADP and other diphosphonucleosides, and allosterically inhibited by phosphoenolpyruvate. Its function is as follows. Catalyzes the phosphorylation of D-fructose 6-phosphate to fructose 1,6-bisphosphate by ATP, the first committing step of glycolysis. This is ATP-dependent 6-phosphofructokinase from Streptococcus mutans serotype c (strain ATCC 700610 / UA159).